Here is a 38-residue protein sequence, read N- to C-terminus: Large ribosomal subunit protein bL36 (38 aa).

Belongs to the bacterial ribosomal protein bL36 family.

This chain is Large ribosomal subunit protein bL36, found in Limosilactobacillus fermentum (strain NBRC 3956 / LMG 18251) (Lactobacillus fermentum).